Here is a 248-residue protein sequence, read N- to C-terminus: 4-hydroxy-tetrahydrodipicolinate reductase (248 aa).

NAD(+) is bound by residues 74–76 (GTT) and 99–102 (SANF). His-134 (proton donor/acceptor) is an active-site residue. Residue His-135 participates in (S)-2,3,4,5-tetrahydrodipicolinate binding. Lys-138 functions as the Proton donor in the catalytic mechanism. Residue 144 to 145 (GT) participates in (S)-2,3,4,5-tetrahydrodipicolinate binding.

Belongs to the DapB family.

The protein resides in the cytoplasm. The catalysed reaction is (S)-2,3,4,5-tetrahydrodipicolinate + NAD(+) + H2O = (2S,4S)-4-hydroxy-2,3,4,5-tetrahydrodipicolinate + NADH + H(+). It carries out the reaction (S)-2,3,4,5-tetrahydrodipicolinate + NADP(+) + H2O = (2S,4S)-4-hydroxy-2,3,4,5-tetrahydrodipicolinate + NADPH + H(+). It participates in amino-acid biosynthesis; L-lysine biosynthesis via DAP pathway; (S)-tetrahydrodipicolinate from L-aspartate: step 4/4. Functionally, catalyzes the conversion of 4-hydroxy-tetrahydrodipicolinate (HTPA) to tetrahydrodipicolinate. The sequence is that of 4-hydroxy-tetrahydrodipicolinate reductase from Chlorobium phaeobacteroides (strain DSM 266 / SMG 266 / 2430).